A 180-amino-acid chain; its full sequence is Putative 3-methyladenine DNA glycosylase (180 aa).

This sequence belongs to the DNA glycosylase MPG family.

This is Putative 3-methyladenine DNA glycosylase from Ehrlichia chaffeensis (strain ATCC CRL-10679 / Arkansas).